The chain runs to 130 residues: T-cell receptor beta chain V region A20.2.25 (130 aa).

A signal peptide spans 1–21; that stretch reads MSCRLLLYVSLCLVETALMNT. The tract at residues 22 to 112 is v segment; it reads KITQSPRYLI…DSAVYFCASS (91 aa). 2 N-linked (GlcNAc...) asparagine glycosylation sites follow: Asn36 and Asn75. The tract at residues 113–115 is d segment; it reads HGE. Residues 116-130 are j segment; the sequence is NTEVFFGKGTTLTVV.

The chain is T-cell receptor beta chain V region A20.2.25 from Mus musculus (Mouse).